The sequence spans 72 residues: MAKEEVLEFPGVVTELLPNATFRVKLENEHEIIAHTAGRMRKNRIRVLAGDKVLVEMTPYDLTKGRITYRFK.

Residues 1 to 72 enclose the S1-like domain; the sequence is MAKEEVLEFP…TKGRITYRFK (72 aa).

The protein belongs to the IF-1 family. As to quaternary structure, component of the 30S ribosomal translation pre-initiation complex which assembles on the 30S ribosome in the order IF-2 and IF-3, IF-1 and N-formylmethionyl-tRNA(fMet); mRNA recruitment can occur at any time during PIC assembly.

It localises to the cytoplasm. One of the essential components for the initiation of protein synthesis. Stabilizes the binding of IF-2 and IF-3 on the 30S subunit to which N-formylmethionyl-tRNA(fMet) subsequently binds. Helps modulate mRNA selection, yielding the 30S pre-initiation complex (PIC). Upon addition of the 50S ribosomal subunit IF-1, IF-2 and IF-3 are released leaving the mature 70S translation initiation complex. The protein is Translation initiation factor IF-1 of Sinorhizobium medicae (strain WSM419) (Ensifer medicae).